The chain runs to 426 residues: Synaptotagmin-13 (426 aa).

Topologically, residues 1-6 are vesicular; that stretch reads MVLSVP. Residues 7–29 traverse the membrane as a helical segment; it reads VIALGATLGTATSILALCGVTCL. Residues 30-426 are Cytoplasmic-facing; the sequence is CRHMHPKKGL…QIAMWHQLHL (397 aa). C2 domains follow at residues 158–275 and 287–422; these read QAPK…AQWG and GTGE…AMWH.

Belongs to the synaptotagmin family. In terms of assembly, interacts with NRXN1. As to expression, expressed in brain, spleen, kidney and testis.

It is found in the membrane. May be involved in transport vesicle docking to the plasma membrane. This chain is Synaptotagmin-13 (Syt13), found in Rattus norvegicus (Rat).